We begin with the raw amino-acid sequence, 271 residues long: Urease accessory protein UreD (271 aa).

Belongs to the UreD family. UreD, UreF and UreG form a complex that acts as a GTP-hydrolysis-dependent molecular chaperone, activating the urease apoprotein by helping to assemble the nickel containing metallocenter of UreC. The UreE protein probably delivers the nickel.

Its subcellular location is the cytoplasm. Functionally, required for maturation of urease via the functional incorporation of the urease nickel metallocenter. This chain is Urease accessory protein UreD, found in Mycolicibacterium smegmatis (strain ATCC 700084 / mc(2)155) (Mycobacterium smegmatis).